The sequence spans 538 residues: MQLTELSIQSQNPFVRDYINGKKEIEPFFDYGLSNESWSVRLDDLSSRTYDRDALADYLLDYHRKFQSATMNETIERLRDPKSVVVVGGQQAGLLTGPLYTIHKIVSILLLAKQKEQELNVPVIPVFWVAGEDHDLEEINHVYISDGGKVKKHKLPQSHWKKSQAAKTALDAEKAEKWLDGIFASFEETEYTNDLLGHLRRCLRQSLSFTDFFEFLVADMFEQDGLILLNSGDPGIRNLEARFFRQLLDKNDELTDSVKRQQELMKQLGYTPIIEGAAQHANIFYERDGERFLIEKENGAFFIKELHLQWSEAELCDLICQNPEAFSNNVVTRPLMQEYLLPTLAFIAGPGEINYWGELKGAFQVMGYKMPPVVPRLQVTFLERHIEKKLDERGIELRESIEKGARAKKEQYFQDKVPSGFTDSVKQAKEKIENIHSAVRAEALEIDGSLGPLLEKNAGFIQDQLQFLEKTVIRRIEEKENYILRDFDKIQTSIKPLDAPQERIWNIVYYLNKYGPDFLEKYKDLPYSFQNMHQVVKL.

The stretch at Leu-454–Tyr-482 forms a coiled coil.

This sequence belongs to the BshC family.

Its function is as follows. Involved in bacillithiol (BSH) biosynthesis. May catalyze the last step of the pathway, the addition of cysteine to glucosamine malate (GlcN-Mal) to generate BSH. The polypeptide is Putative cysteine ligase BshC (Bacillus licheniformis (strain ATCC 14580 / DSM 13 / JCM 2505 / CCUG 7422 / NBRC 12200 / NCIMB 9375 / NCTC 10341 / NRRL NRS-1264 / Gibson 46)).